We begin with the raw amino-acid sequence, 80 residues long: Sulfur carrier protein TusA (80 aa).

Cys-17 acts as the Cysteine persulfide intermediate in catalysis.

This sequence belongs to the sulfur carrier protein TusA family.

It is found in the cytoplasm. In terms of biological role, sulfur carrier protein which probably makes part of a sulfur-relay system. This Pseudomonas putida (strain GB-1) protein is Sulfur carrier protein TusA.